Here is a 129-residue protein sequence, read N- to C-terminus: uncharacterized protein (129 aa).

This is an uncharacterized protein from Homo sapiens (Human).